Consider the following 196-residue polypeptide: Large ribosomal subunit protein uL18 (196 aa).

This sequence belongs to the universal ribosomal protein uL18 family. In terms of assembly, part of the 50S ribosomal subunit. Contacts the 5S and 23S rRNAs.

This is one of the proteins that bind and probably mediate the attachment of the 5S RNA into the large ribosomal subunit, where it forms part of the central protuberance. This Saccharolobus islandicus (strain L.S.2.15 / Lassen #1) (Sulfolobus islandicus) protein is Large ribosomal subunit protein uL18.